The chain runs to 128 residues: Cytochrome c-type biogenesis protein CcmE (128 aa).

The Cytoplasmic portion of the chain corresponds to 1-8; it reads MQKRVRNR. Residues 9-29 traverse the membrane as a helical; Signal-anchor for type II membrane protein segment; that stretch reads LITIIICFCSAFLGIGIILYN. The Periplasmic segment spans residues 30-128; the sequence is LENNIVFFLP…KHDENYRPTR (99 aa). Heme is bound by residues histidine 120 and tyrosine 124.

It belongs to the CcmE/CycJ family.

The protein resides in the cell inner membrane. In terms of biological role, heme chaperone required for the biogenesis of c-type cytochromes. Transiently binds heme delivered by CcmC and transfers the heme to apo-cytochromes in a process facilitated by CcmF and CcmH. In Rickettsia canadensis (strain McKiel), this protein is Cytochrome c-type biogenesis protein CcmE.